Consider the following 322-residue polypeptide: Lymphatic vessel endothelial hyaluronic acid receptor 1 (322 aa).

The signal sequence occupies residues 1 to 19 (MARCFSLVLLLTSIWTTRL). At 20-238 (LVQGSLRAEE…EAAGFGGVPT (219 aa)) the chain is on the extracellular side. The 91-residue stretch at 40–130 (GITLVSKKAN…SRQFAAYCYN (91 aa)) folds into the Link domain. An N-linked (GlcNAc...) asparagine glycan is attached at N53. Cystine bridges form between C61–C128 and C85–C106. An N-linked (GlcNAc...) asparagine glycan is attached at N130. Residues 239 to 259 (ALLVLALLFFGAAAGLGFCYV) form a helical membrane-spanning segment. Over 260 to 322 (KRYVKAFPFT…TTVRCLEAEV (63 aa)) the chain is Cytoplasmic. Residues 279–309 (ETKVVKEEKANDSNPNEESKKTDKNPEESKS) are compositionally biased toward basic and acidic residues. Positions 279-322 (ETKVVKEEKANDSNPNEESKKTDKNPEESKSPSKTTVRCLEAEV) are disordered.

Homodimer; disulfide-linked. Interacts with PDGFB and IGFBP3. Forms a transient ternary complex with PDGFB and PDGFRB in TGN. Post-translationally, O-glycosylated. In terms of tissue distribution, mainly expressed in endothelial cells lining lymphatic vessels.

Its subcellular location is the cell membrane. Functionally, ligand-specific transporter trafficking between intracellular organelles (TGN) and the plasma membrane. Plays a role in autocrine regulation of cell growth mediated by growth regulators containing cell surface retention sequence binding (CRS). May act as a hyaluronan (HA) transporter, either mediating its uptake for catabolism within lymphatic endothelial cells themselves, or its transport into the lumen of afferent lymphatic vessels for subsequent re-uptake and degradation in lymph nodes. Binds to pericelluar hyaluronan matrices deposited on the surface of leukocytes and facilitates cell adhesion and migration through lymphatic endothelium. This is Lymphatic vessel endothelial hyaluronic acid receptor 1 (LYVE1) from Homo sapiens (Human).